The following is a 196-amino-acid chain: 3-isopropylmalate dehydratase small subunit (196 aa).

Belongs to the LeuD family. LeuD type 1 subfamily. Heterodimer of LeuC and LeuD.

The enzyme catalyses (2R,3S)-3-isopropylmalate = (2S)-2-isopropylmalate. The protein operates within amino-acid biosynthesis; L-leucine biosynthesis; L-leucine from 3-methyl-2-oxobutanoate: step 2/4. Catalyzes the isomerization between 2-isopropylmalate and 3-isopropylmalate, via the formation of 2-isopropylmaleate. This Corynebacterium efficiens (strain DSM 44549 / YS-314 / AJ 12310 / JCM 11189 / NBRC 100395) protein is 3-isopropylmalate dehydratase small subunit.